A 251-amino-acid chain; its full sequence is 1-(5-phosphoribosyl)-5-[(5-phosphoribosylamino)methylideneamino] imidazole-4-carboxamide isomerase (251 aa).

Residue Asp-8 is the Proton acceptor of the active site. Asp-131 (proton donor) is an active-site residue.

The protein belongs to the HisA/HisF family.

The protein localises to the cytoplasm. The enzyme catalyses 1-(5-phospho-beta-D-ribosyl)-5-[(5-phospho-beta-D-ribosylamino)methylideneamino]imidazole-4-carboxamide = 5-[(5-phospho-1-deoxy-D-ribulos-1-ylimino)methylamino]-1-(5-phospho-beta-D-ribosyl)imidazole-4-carboxamide. The protein operates within amino-acid biosynthesis; L-histidine biosynthesis; L-histidine from 5-phospho-alpha-D-ribose 1-diphosphate: step 4/9. The chain is 1-(5-phosphoribosyl)-5-[(5-phosphoribosylamino)methylideneamino] imidazole-4-carboxamide isomerase from Azoarcus sp. (strain BH72).